The primary structure comprises 1086 residues: Phosphinothricin tripeptide synthetase PhsC (1086 aa).

Residues 22-43 (RLRAAAAPGPDPAIPRRPDDDG) form a disordered region. Residues 45–484 (VPLSFAQHRL…LAALPVLTRD (440 aa)) are condensation. Positions 510–901 (LEDSARRHPD…GRTDHQVKLR (392 aa)) are adenylation. The interval 983–1007 (GKLDREALPDPLAQSGDTAGNRPPL) is disordered. The region spanning 1006–1081 (PLLDPVEERI…GLARSVSAER (76 aa)) is the Carrier domain. S1041 carries the O-(pantetheine 4'-phosphoryl)serine modification.

The protein belongs to the NRP synthetase family. Requires pantetheine 4'-phosphate as cofactor.

It carries out the reaction holo-[peptidyl-carrier protein] + L-alanine + ATP = L-alanyl-[peptidyl-carrier protein] + AMP + diphosphate. Its pathway is secondary metabolite biosynthesis; bialaphos biosynthesis. In terms of biological role, involved in the biosynthesis of phosphinothricin tripeptide (PTT), also known as bialaphos (BA), a natural-product antibiotic and potent herbicide. Adenylates L-alanine and loads it onto a peptidyl carrier domain via a thioester linkage to the phosphopanthetheine moiety. Shows weaker activity with aminobutyric acid and L-serine. The sequence is that of Phosphinothricin tripeptide synthetase PhsC from Streptomyces viridochromogenes (strain DSM 40736 / JCM 4977 / BCRC 1201 / Tue 494).